The chain runs to 42 residues: Conotoxin Au11.6 (42 aa).

Intrachain disulfides connect C6-C20, C13-C25, C19-C30, and C24-C37.

This sequence belongs to the conotoxin I1 superfamily. In terms of tissue distribution, expressed by the venom duct.

It localises to the secreted. The chain is Conotoxin Au11.6 from Conus aulicus (Princely cone).